The primary structure comprises 115 residues: uncharacterized protein (115 aa).

This is an uncharacterized protein from Acidianus convivator (ATV).